A 139-amino-acid polypeptide reads, in one-letter code: 3-hydroxyacyl-[acyl-carrier-protein] dehydratase FabZ (139 aa).

H46 is an active-site residue.

The protein belongs to the thioester dehydratase family. FabZ subfamily.

It is found in the cytoplasm. The catalysed reaction is a (3R)-hydroxyacyl-[ACP] = a (2E)-enoyl-[ACP] + H2O. Functionally, involved in unsaturated fatty acids biosynthesis. Catalyzes the dehydration of short chain beta-hydroxyacyl-ACPs and long chain saturated and unsaturated beta-hydroxyacyl-ACPs. This chain is 3-hydroxyacyl-[acyl-carrier-protein] dehydratase FabZ, found in Streptococcus pyogenes serotype M3 (strain ATCC BAA-595 / MGAS315).